The sequence spans 1373 residues: DNA-directed RNA polymerase subunit beta (1373 aa).

Belongs to the RNA polymerase beta chain family. As to quaternary structure, the RNAP catalytic core consists of 2 alpha, 1 beta, 1 beta' and 1 omega subunit. When a sigma factor is associated with the core the holoenzyme is formed, which can initiate transcription.

It carries out the reaction RNA(n) + a ribonucleoside 5'-triphosphate = RNA(n+1) + diphosphate. Functionally, DNA-dependent RNA polymerase catalyzes the transcription of DNA into RNA using the four ribonucleoside triphosphates as substrates. This Rickettsia massiliae (strain Mtu5) protein is DNA-directed RNA polymerase subunit beta.